The sequence spans 1054 residues: Isoleucine--tRNA ligase (1054 aa).

Residues 58–68 (PFANGLPHYGH) carry the 'HIGH' region motif. Residues 627-631 (KMSKS) carry the 'KMSKS' region motif. Position 630 (K630) interacts with ATP.

Belongs to the class-I aminoacyl-tRNA synthetase family. IleS type 2 subfamily. As to quaternary structure, monomer. The cofactor is Zn(2+).

The protein localises to the cytoplasm. The catalysed reaction is tRNA(Ile) + L-isoleucine + ATP = L-isoleucyl-tRNA(Ile) + AMP + diphosphate. In terms of biological role, catalyzes the attachment of isoleucine to tRNA(Ile). As IleRS can inadvertently accommodate and process structurally similar amino acids such as valine, to avoid such errors it has two additional distinct tRNA(Ile)-dependent editing activities. One activity is designated as 'pretransfer' editing and involves the hydrolysis of activated Val-AMP. The other activity is designated 'posttransfer' editing and involves deacylation of mischarged Val-tRNA(Ile). This Corynebacterium efficiens (strain DSM 44549 / YS-314 / AJ 12310 / JCM 11189 / NBRC 100395) protein is Isoleucine--tRNA ligase.